Consider the following 448-residue polypeptide: Mitochondrial distribution and morphology protein 10 (448 aa).

Belongs to the MDM10 family. As to quaternary structure, component of the ER-mitochondria encounter structure (ERMES) or MDM complex, composed of MMM1, MDM10, MDM12 and MDM34. Associates with the mitochondrial outer membrane sorting assembly machinery SAM(core) complex.

The protein resides in the mitochondrion outer membrane. Functionally, component of the ERMES/MDM complex, which serves as a molecular tether to connect the endoplasmic reticulum and mitochondria. Components of this complex are involved in the control of mitochondrial shape and protein biogenesis and may function in phospholipid exchange. MDM10 is involved in the late assembly steps of the general translocase of the mitochondrial outer membrane (TOM complex). Functions in the TOM40-specific route of the assembly of outer membrane beta-barrel proteins, including the association of TOM40 with the receptor TOM22 and small TOM proteins. Can associate with the SAM(core) complex as well as the MDM12-MMM1 complex, both involved in late steps of the major beta-barrel assembly pathway, that is responsible for biogenesis of all outer membrane beta-barrel proteins. May act as a switch that shuttles between both complexes and channels precursor proteins into the TOM40-specific pathway. Plays a role in mitochondrial morphology and in the inheritance of mitochondria. This Podospora anserina (strain S / ATCC MYA-4624 / DSM 980 / FGSC 10383) (Pleurage anserina) protein is Mitochondrial distribution and morphology protein 10.